The sequence spans 285 residues: Urease accessory protein UreD (285 aa).

The protein belongs to the UreD family. In terms of assembly, ureD, UreF and UreG form a complex that acts as a GTP-hydrolysis-dependent molecular chaperone, activating the urease apoprotein by helping to assemble the nickel containing metallocenter of UreC. The UreE protein probably delivers the nickel.

It is found in the cytoplasm. Its function is as follows. Required for maturation of urease via the functional incorporation of the urease nickel metallocenter. In Citrobacter koseri (strain ATCC BAA-895 / CDC 4225-83 / SGSC4696), this protein is Urease accessory protein UreD.